The chain runs to 391 residues: E1B 55 kDa protein (391 aa).

Serine 387 carries the post-translational modification Phosphoserine.

It belongs to the adenoviridae E1B 55 kDa protein family. Interacts with host PML-4 and PML-5; this interaction promotes efficient subnuclear targeting of E1B-55K to PML nuclear bodies. Interacts with E4-ORF3 protein. Interacts with E4-ORF6 protein.

Its subcellular location is the host nucleus. The protein localises to the host cytoplasm. In terms of biological role, plays a major role to prevent cellular inhibition of viral genome replication. Assembles an SCF-like E3 ubiquitin ligase complex based on the cellular proteins ELOB, ELOC, CUL5 and RBX1, in cooperation with viral E4orf6. This viral RING-type ligase ubiquitinates cellular substrates and targets them to proteasomal degradation: TP53/p53, LIG4, MRE11-RAD50-NBS1 (MRN) complex, ITGA3, DAXX and BLM. E1B-55K probably acts as the substrate-specific adapter of the SCF-like E3 ubiquitin ligase complex. Degradation of host TP53/p53 activity is essential for preventing E1A-induced TP53 accumulation that would otherwise lead to cell apoptosis and growth arrest. E1B-55K also inactivates TP53 transcription-factor activity by binding its transactivation domain. E1B-55K also functions as a SUMO1 E3 ligase for TP53 which causes the latter to be sequestered in promyelocytic leukemia (PML) nuclear bodies thereby contributing to maximal inhibition of TP53 function. In Tree shrew adenovirus serotype 1 (TSAdV-1), this protein is E1B 55 kDa protein.